A 346-amino-acid polypeptide reads, in one-letter code: Coproporphyrin III ferrochelatase (346 aa).

Fe-coproporphyrin III-binding residues include Ser-52 and Tyr-121. The Fe(2+) site is built by His-181 and Glu-264.

This sequence belongs to the ferrochelatase family.

It is found in the cytoplasm. It carries out the reaction Fe-coproporphyrin III + 2 H(+) = coproporphyrin III + Fe(2+). The protein operates within porphyrin-containing compound metabolism; protoheme biosynthesis. In terms of biological role, involved in coproporphyrin-dependent heme b biosynthesis. Catalyzes the insertion of ferrous iron into coproporphyrin III to form Fe-coproporphyrin III. This Mycobacterium sp. (strain KMS) protein is Coproporphyrin III ferrochelatase.